A 347-amino-acid chain; its full sequence is UPF0284 protein LS215_0030 (347 aa).

It belongs to the UPF0284 family.

The sequence is that of UPF0284 protein LS215_0030 from Saccharolobus islandicus (strain L.S.2.15 / Lassen #1) (Sulfolobus islandicus).